The following is a 596-amino-acid chain: Putative ankyrin repeat protein FPV024 (596 aa).

ANK repeat units lie at residues 5 to 34 (KLRK…TFSN), 37 to 66 (ALST…DINK), 68 to 96 (KSPP…DIEK), 99 to 128 (LGNS…DPNT), 130 to 158 (FINY…SLNI), 162 to 191 (HFKT…SLTI), 195 to 225 (YNNH…PVNE), 229 to 258 (LERT…DPNI), 262 to 291 (CLGT…NVNI), 295 to 324 (TIDT…NTRL), 326 to 355 (SRNP…EVNI), 359 to 389 (EGYT…NPNM), and 394 to 423 (NENT…DVHS).

The protein is Putative ankyrin repeat protein FPV024 of Fowlpox virus (strain NVSL) (FPV).